Reading from the N-terminus, the 706-residue chain is Polyribonucleotide nucleotidyltransferase (706 aa).

Mg(2+)-binding residues include Asp485 and Asp491. A KH domain is found at 552 to 611 (PRMLKMKIHPDKIREVIGSGGKTINKIIEDTGVKIDIENDGTIFIAAQTQEAGELALSII). One can recognise an S1 motif domain in the interval 621–689 (GDIFKGKVIK…QQGKVSLSRK (69 aa)).

This sequence belongs to the polyribonucleotide nucleotidyltransferase family. The cofactor is Mg(2+).

Its subcellular location is the cytoplasm. It catalyses the reaction RNA(n+1) + phosphate = RNA(n) + a ribonucleoside 5'-diphosphate. Its function is as follows. Involved in mRNA degradation. Catalyzes the phosphorolysis of single-stranded polyribonucleotides processively in the 3'- to 5'-direction. The polypeptide is Polyribonucleotide nucleotidyltransferase (Alkaliphilus oremlandii (strain OhILAs) (Clostridium oremlandii (strain OhILAs))).